Consider the following 122-residue polypeptide: Large ribosomal subunit protein uL18 (122 aa).

Belongs to the universal ribosomal protein uL18 family. As to quaternary structure, part of the 50S ribosomal subunit; part of the 5S rRNA/L5/L18/L25 subcomplex. Contacts the 5S and 23S rRNAs.

In terms of biological role, this is one of the proteins that bind and probably mediate the attachment of the 5S RNA into the large ribosomal subunit, where it forms part of the central protuberance. The chain is Large ribosomal subunit protein uL18 from Prochlorococcus marinus (strain AS9601).